A 329-amino-acid chain; its full sequence is Lipoyl synthase (329 aa).

The interval 1–23 (MTDLTATPAPAEPAASAYDPTAK) is disordered. The [4Fe-4S] cluster site is built by Cys76, Cys81, Cys87, Cys102, Cys106, Cys109, and Ser316. The region spanning 87–305 (CFGKGTATFM…EEEAYKMGFT (219 aa)) is the Radical SAM core domain.

This sequence belongs to the radical SAM superfamily. Lipoyl synthase family. Requires [4Fe-4S] cluster as cofactor.

Its subcellular location is the cytoplasm. The catalysed reaction is [[Fe-S] cluster scaffold protein carrying a second [4Fe-4S](2+) cluster] + N(6)-octanoyl-L-lysyl-[protein] + 2 oxidized [2Fe-2S]-[ferredoxin] + 2 S-adenosyl-L-methionine + 4 H(+) = [[Fe-S] cluster scaffold protein] + N(6)-[(R)-dihydrolipoyl]-L-lysyl-[protein] + 4 Fe(3+) + 2 hydrogen sulfide + 2 5'-deoxyadenosine + 2 L-methionine + 2 reduced [2Fe-2S]-[ferredoxin]. Its pathway is protein modification; protein lipoylation via endogenous pathway; protein N(6)-(lipoyl)lysine from octanoyl-[acyl-carrier-protein]: step 2/2. In terms of biological role, catalyzes the radical-mediated insertion of two sulfur atoms into the C-6 and C-8 positions of the octanoyl moiety bound to the lipoyl domains of lipoate-dependent enzymes, thereby converting the octanoylated domains into lipoylated derivatives. The chain is Lipoyl synthase from Burkholderia mallei (strain NCTC 10247).